The chain runs to 632 residues: tRNA 5-methylaminomethyl-2-thiouridine biosynthesis bifunctional protein MnmC (632 aa).

Residues 1 to 247 (MNSRIFPAAM…KWHMTLGQRL (247 aa)) form a tRNA (mnm(5)s(2)U34)-methyltransferase region. Positions 267–632 (VGAGLAGAAV…TDLLAQIAPR (366 aa)) are FAD-dependent cmnm(5)s(2)U34 oxidoreductase.

In the N-terminal section; belongs to the methyltransferase superfamily. tRNA (mnm(5)s(2)U34)-methyltransferase family. This sequence in the C-terminal section; belongs to the DAO family. Requires FAD as cofactor.

Its subcellular location is the cytoplasm. The enzyme catalyses 5-aminomethyl-2-thiouridine(34) in tRNA + S-adenosyl-L-methionine = 5-methylaminomethyl-2-thiouridine(34) in tRNA + S-adenosyl-L-homocysteine + H(+). Functionally, catalyzes the last two steps in the biosynthesis of 5-methylaminomethyl-2-thiouridine (mnm(5)s(2)U) at the wobble position (U34) in tRNA. Catalyzes the FAD-dependent demodification of cmnm(5)s(2)U34 to nm(5)s(2)U34, followed by the transfer of a methyl group from S-adenosyl-L-methionine to nm(5)s(2)U34, to form mnm(5)s(2)U34. The polypeptide is tRNA 5-methylaminomethyl-2-thiouridine biosynthesis bifunctional protein MnmC (Bordetella bronchiseptica (strain ATCC BAA-588 / NCTC 13252 / RB50) (Alcaligenes bronchisepticus)).